A 460-amino-acid chain; its full sequence is Serine incorporator 5 (460 aa).

Over 1–36 the chain is Extracellular; it reads MCTPCCVSQLACCCGSAACSLCCGCCPKIKQSTSTR. The helical transmembrane segment at 37–57 threads the bilayer; the sequence is FMYALFFMLVTVTCVIMMSPT. Over 58–89 the chain is Cytoplasmic; sequence VEMAMREHIPFYSQMCQQLNAGENCSTLVGYS. Residues 90 to 110 traverse the membrane as a helical segment; sequence AVYKVCFGMACFFFFFAVFTI. Residues 111–124 are Extracellular-facing; it reads RVQNSTGCRAAVHN. Asn-114 is a glycosylation site (N-linked (GlcNAc...) asparagine). The chain crosses the membrane as a helical span at residues 125–145; it reads GFWFFKFVALLACCAGGFFLP. Topologically, residues 146-156 are cytoplasmic; it reads NQDQFLEVWRY. The helical transmembrane segment at 157 to 177 threads the bilayer; the sequence is VGAAGGFLFIIIQLMLLVQFA. Residues 178–197 lie on the Extracellular side of the membrane; the sequence is HRWNQNWSSGATYNKLWYAA. Residue Asn-183 is glycosylated (N-linked (GlcNAc...) asparagine). A helical transmembrane segment spans residues 198-218; sequence LALVTLVLFSVAVGGMVFMFM. Residues 219 to 230 lie on the Cytoplasmic side of the membrane; that stretch reads YYTHPEACFLNK. A helical membrane pass occupies residues 231-251; the sequence is IFLGVNGGLCFIVSLLAISPC. At 252-259 the chain is on the extracellular side; that stretch reads IQTFQPTS. Residues 260 to 280 traverse the membrane as a helical segment; it reads GLLQPAVITLYVMYLTFSALA. Topologically, residues 281 to 311 are cytoplasmic; that stretch reads SKPIEMVEDEIKGNITVCVFPFKSGLKSDTN. Residues 312–332 traverse the membrane as a helical segment; sequence IVTGVGTAILFCCILYSCLIS. At 333-391 the chain is on the extracellular side; it reads TTKRSSAALQVYRNDMPENERARCCFCWVDDTEDYDDEKTSGGQNVKYDERDGTVYSYC. The helical transmembrane segment at 392–412 threads the bilayer; the sequence is FFHFVFFLGSLYVMMTVTNWF. The Cytoplasmic segment spans residues 413–433; it reads HYDNAKIERLLEGSWSVFWIK. The helical transmembrane segment at 434–454 threads the bilayer; sequence MASSWVCLFFYMWTLVVPMLF. The Extracellular segment spans residues 455–460; sequence PQRFQA.

Belongs to the TDE1 family.

The protein localises to the cell membrane. It carries out the reaction a 1,2-diacyl-sn-glycero-3-phospho-L-serine(in) = a 1,2-diacyl-sn-glycero-3-phospho-L-serine(out). The enzyme catalyses a 1,2-diacyl-sn-glycero-3-phosphocholine(in) = a 1,2-diacyl-sn-glycero-3-phosphocholine(out). It catalyses the reaction a 1,2-diacyl-sn-glycero-3-phosphoethanolamine(in) = a 1,2-diacyl-sn-glycero-3-phosphoethanolamine(out). In terms of biological role, restriction factor required to restrict infectivity of gammaretroviruses: acts by inhibiting an early step of viral infection. Impairs the penetration of the viral particle into the cytoplasm. Non-ATP-dependent, non-specific lipid transporter for phosphatidylserine, phosphatidylcholine, and phosphatidylethanolamine. Functions as a scramblase that flips lipids in both directions across the membrane. Phospholipid scrambling results in gammaretroviral surface exposure of phosphatidylserine and loss of membrane asymmetry, which leads to loss of infectivity. Enhances the incorporation of serine into phosphatidylserine and sphingolipids. This Danio rerio (Zebrafish) protein is Serine incorporator 5 (serinc5).